The following is a 211-amino-acid chain: Thiamine-phosphate synthase (211 aa).

Residues 37-41 (QLRIK) and Asn69 each bind 4-amino-2-methyl-5-(diphosphooxymethyl)pyrimidine. Mg(2+)-binding residues include Asp70 and Asp89. 4-amino-2-methyl-5-(diphosphooxymethyl)pyrimidine is bound at residue Ser108. 134-136 (TQT) is a 2-[(2R,5Z)-2-carboxy-4-methylthiazol-5(2H)-ylidene]ethyl phosphate binding site. Lys137 is a 4-amino-2-methyl-5-(diphosphooxymethyl)pyrimidine binding site. 2-[(2R,5Z)-2-carboxy-4-methylthiazol-5(2H)-ylidene]ethyl phosphate is bound by residues Gly166 and 186–187 (VS).

Belongs to the thiamine-phosphate synthase family. Mg(2+) is required as a cofactor.

It catalyses the reaction 2-[(2R,5Z)-2-carboxy-4-methylthiazol-5(2H)-ylidene]ethyl phosphate + 4-amino-2-methyl-5-(diphosphooxymethyl)pyrimidine + 2 H(+) = thiamine phosphate + CO2 + diphosphate. It carries out the reaction 2-(2-carboxy-4-methylthiazol-5-yl)ethyl phosphate + 4-amino-2-methyl-5-(diphosphooxymethyl)pyrimidine + 2 H(+) = thiamine phosphate + CO2 + diphosphate. The enzyme catalyses 4-methyl-5-(2-phosphooxyethyl)-thiazole + 4-amino-2-methyl-5-(diphosphooxymethyl)pyrimidine + H(+) = thiamine phosphate + diphosphate. The protein operates within cofactor biosynthesis; thiamine diphosphate biosynthesis; thiamine phosphate from 4-amino-2-methyl-5-diphosphomethylpyrimidine and 4-methyl-5-(2-phosphoethyl)-thiazole: step 1/1. Functionally, condenses 4-methyl-5-(beta-hydroxyethyl)thiazole monophosphate (THZ-P) and 2-methyl-4-amino-5-hydroxymethyl pyrimidine pyrophosphate (HMP-PP) to form thiamine monophosphate (TMP). The protein is Thiamine-phosphate synthase of Citrobacter koseri (strain ATCC BAA-895 / CDC 4225-83 / SGSC4696).